The primary structure comprises 837 residues: V-type proton ATPase 116 kDa subunit a 1 (837 aa).

Topologically, residues 1–388 are cytoplasmic; sequence MGELFRSEEM…DAYGIGTYRE (388 aa). Phosphothreonine is present on residues Thr250 and Thr360. Tyr364 bears the Phosphotyrosine mark. The chain crosses the membrane as a helical span at residues 389–407; the sequence is INPAPYTIITFPFLFAVMF. The Vacuolar segment spans residues 408-409; that stretch reads GD. A helical transmembrane segment spans residues 410–426; sequence FGHGILMTLFAVWMVLR. The Cytoplasmic segment spans residues 427-441; it reads ESRILSQKNENEMFS. Residues 442–471 traverse the membrane as a helical segment; that stretch reads TVFSGRYIILLMGVFSMYTGLIYNDCFSKS. The Vacuolar portion of the chain corresponds to 472–534; it reads LNIFGSSWSV…ATNKLTFLNS (63 aa). Residues 535–554 form a helical membrane-spanning segment; sequence FKMKMSVILGIIHMLFGVSL. Topologically, residues 555-572 are cytoplasmic; the sequence is SLFNHIYFKKPLNIYFGF. Residues 573 to 593 form a helical membrane-spanning segment; the sequence is IPEIIFMTSLFGYLVILIFYK. Over 594–638 the chain is Vacuolar; that stretch reads WTAYDAHTSENAPSLLIHFINMFLFSYPESGYSMLYSGQKGIQCF. The helical transmembrane segment at 639-658 threads the bilayer; the sequence is LVVVALLCVPWMLLFKPLVL. Topologically, residues 659–724 are cytoplasmic; sequence RRQYLRRKHL…ATMVHQAIHT (66 aa). A helical membrane pass occupies residues 725 to 749; the sequence is IEYCLGCISNTASYLRLWALSLAHA. Topologically, residues 750–770 are vacuolar; it reads QLSEVLWTMVIHIGLSVKSLA. Residues 771–809 traverse the membrane as a helical segment; sequence GGLVLFFFFTAFATLTVAILLIMEGLSAFLHALRLHWVE. Topologically, residues 810-837 are cytoplasmic; it reads FQNKFYSGTGFKFLPFSFEHIREGKFGE.

This sequence belongs to the V-ATPase 116 kDa subunit family. In terms of assembly, V-ATPase is a heteromultimeric enzyme made up of two complexes: the ATP-hydrolytic V1 complex and the proton translocation V0 complex. The V1 complex consists of three catalytic AB heterodimers that form a heterohexamer, three peripheral stalks each consisting of EG heterodimers, one central rotor including subunits D and F, and the regulatory subunits C and H. The proton translocation complex V0 consists of the proton transport subunit a, a ring of proteolipid subunits c9c'', rotary subunit d, subunits e and f, and the accessory subunits ATP6AP1/Ac45 and ATP6AP2/PRR. Interacts with SPAAR.

Its subcellular location is the cytoplasmic vesicle. It is found in the clathrin-coated vesicle membrane. The protein localises to the secretory vesicle. The protein resides in the synaptic vesicle membrane. It localises to the melanosome. Functionally, subunit of the V0 complex of vacuolar(H+)-ATPase (V-ATPase), a multisubunit enzyme composed of a peripheral complex (V1) that hydrolyzes ATP and a membrane integral complex (V0) that translocates protons. V-ATPase is responsible for the acidification of various organelles, such as lysosomes, endosomes, the trans-Golgi network, and secretory granules, including synaptic vesicles. In certain cell types, can be exported to the plasma membrane, where it is involved in the acidification of the extracellular environment. Required for assembly and activity of the vacuolar ATPase. Through its action on compartment acidification, plays an essential role in neuronal development in terms of integrity and connectivity of neurons. This Pongo abelii (Sumatran orangutan) protein is V-type proton ATPase 116 kDa subunit a 1 (ATP6V0A1).